Here is a 302-residue protein sequence, read N- to C-terminus: MYTELISHKIAELKKERKAVILAHNYQLGEIQEAADFVGDSLELARKAANIDAEVIVFCGVHFMAETAAILSPEKTVLAPEPKAGCPMADMISGAELREFKARYPGLPVVCYVNSTAEVKAESDICCTSANAVKVVESLKSDTVLFVPDQYLGAFVQAHTAKKIISWPGYCPCHARIKPEDILNLKKHYPKAKVVVHPESRPEVTALADGVLSTGQMVTYAARADVKELIVGTEIGMLYRLRKENPNKLFIPVSEQAVCANMKMTTLPKLLASLENMQTVVSVPEEIRRKAVGAVERMLKVT.

Iminosuccinate-binding residues include His-24 and Ser-41. Cys-86 provides a ligand contact to [4Fe-4S] cluster. Iminosuccinate contacts are provided by residues 112 to 114 and Ser-129; that span reads YVN. A [4Fe-4S] cluster-binding site is contributed by Cys-171. Residues 197–199 and Thr-214 each bind iminosuccinate; that span reads HPE. Cys-259 contacts [4Fe-4S] cluster.

This sequence belongs to the quinolinate synthase family. Type 2 subfamily. It depends on [4Fe-4S] cluster as a cofactor.

It is found in the cytoplasm. It carries out the reaction iminosuccinate + dihydroxyacetone phosphate = quinolinate + phosphate + 2 H2O + H(+). It participates in cofactor biosynthesis; NAD(+) biosynthesis; quinolinate from iminoaspartate: step 1/1. Functionally, catalyzes the condensation of iminoaspartate with dihydroxyacetone phosphate to form quinolinate. The sequence is that of Quinolinate synthase from Dehalococcoides mccartyi (strain ATCC BAA-2266 / KCTC 15142 / 195) (Dehalococcoides ethenogenes (strain 195)).